Here is a 209-residue protein sequence, read N- to C-terminus: Ribosomal RNA large subunit methyltransferase E (209 aa).

Positions 63, 65, 83, 99, and 124 each coordinate S-adenosyl-L-methionine. The active-site Proton acceptor is the Lys-164.

This sequence belongs to the class I-like SAM-binding methyltransferase superfamily. RNA methyltransferase RlmE family.

Its subcellular location is the cytoplasm. The enzyme catalyses uridine(2552) in 23S rRNA + S-adenosyl-L-methionine = 2'-O-methyluridine(2552) in 23S rRNA + S-adenosyl-L-homocysteine + H(+). In terms of biological role, specifically methylates the uridine in position 2552 of 23S rRNA at the 2'-O position of the ribose in the fully assembled 50S ribosomal subunit. The chain is Ribosomal RNA large subunit methyltransferase E from Yersinia pseudotuberculosis serotype O:1b (strain IP 31758).